Consider the following 564-residue polypeptide: Esterase FE4 (564 aa).

The signal sequence occupies residues 1–23; sequence MKNTCGILLNLFLFIGCFLTCSA. A glycan (N-linked (GlcNAc...) asparagine) is linked at N81. A disulfide bond links C89 and C106. The Acyl-ester intermediate role is filled by S214. Cysteines 266 and 277 form a disulfide. N269 is a glycosylation site (N-linked (GlcNAc...) asparagine). E339 (charge relay system) is an active-site residue. N-linked (GlcNAc...) asparagine glycans are attached at residues N371, N404, and N443. H463 functions as the Charge relay system in the catalytic mechanism.

The protein belongs to the type-B carboxylesterase/lipase family.

It catalyses the reaction a carboxylic ester + H2O = an alcohol + a carboxylate + H(+). Its function is as follows. Overproduction of nonspecific esterases is a common mechanism of resistance to organophosphate insecticides. The sequence is that of Esterase FE4 from Myzus persicae (Green peach aphid).